A 502-amino-acid polypeptide reads, in one-letter code: ATP synthase subunit alpha (502 aa).

The tract at residues 114 to 139 (PIDGRGPIETSKTRPIESPAPGVMDR) is disordered. 169-176 (GDRQTGKT) is an ATP binding site.

The protein belongs to the ATPase alpha/beta chains family. F-type ATPases have 2 components, CF(1) - the catalytic core - and CF(0) - the membrane proton channel. CF(1) has five subunits: alpha(3), beta(3), gamma(1), delta(1), epsilon(1). CF(0) has three main subunits: a(1), b(2) and c(9-12). The alpha and beta chains form an alternating ring which encloses part of the gamma chain. CF(1) is attached to CF(0) by a central stalk formed by the gamma and epsilon chains, while a peripheral stalk is formed by the delta and b chains.

Its subcellular location is the cell membrane. The enzyme catalyses ATP + H2O + 4 H(+)(in) = ADP + phosphate + 5 H(+)(out). Functionally, produces ATP from ADP in the presence of a proton gradient across the membrane. The alpha chain is a regulatory subunit. The polypeptide is ATP synthase subunit alpha (Halalkalibacterium halodurans (strain ATCC BAA-125 / DSM 18197 / FERM 7344 / JCM 9153 / C-125) (Bacillus halodurans)).